The chain runs to 20 residues: N-acetyl-D-galactosamine-binding lectin subunit B (20 aa).

In terms of assembly, disulfide-linked heterodimer of A and B chains.

Its function is as follows. Gal / GalNAc-specific lectin. Agglutinates both native and trypsin-treated rabbit erythrocytes but not human erythrocytes irrespective of blood group type. The sequence is that of N-acetyl-D-galactosamine-binding lectin subunit B from Iris hollandica (Dutch iris).